We begin with the raw amino-acid sequence, 484 residues long: tRNA sulfurtransferase (484 aa).

Positions 61-165 (PLILDLLKRT…GDKMLLVEAR (105 aa)) constitute a THUMP domain. Residues 183–184 (LI), Lys265, Gly287, and Gln296 contribute to the ATP site. The cysteines at positions 344 and 456 are disulfide-linked. The Rhodanese domain occupies 404-483 (LTEKDIILDI…YQNVKVFNLP (80 aa)). The Cysteine persulfide intermediate role is filled by Cys456.

This sequence belongs to the ThiI family.

The protein resides in the cytoplasm. It carries out the reaction [ThiI sulfur-carrier protein]-S-sulfanyl-L-cysteine + a uridine in tRNA + 2 reduced [2Fe-2S]-[ferredoxin] + ATP + H(+) = [ThiI sulfur-carrier protein]-L-cysteine + a 4-thiouridine in tRNA + 2 oxidized [2Fe-2S]-[ferredoxin] + AMP + diphosphate. It catalyses the reaction [ThiS sulfur-carrier protein]-C-terminal Gly-Gly-AMP + S-sulfanyl-L-cysteinyl-[cysteine desulfurase] + AH2 = [ThiS sulfur-carrier protein]-C-terminal-Gly-aminoethanethioate + L-cysteinyl-[cysteine desulfurase] + A + AMP + 2 H(+). The protein operates within cofactor biosynthesis; thiamine diphosphate biosynthesis. Its function is as follows. Catalyzes the ATP-dependent transfer of a sulfur to tRNA to produce 4-thiouridine in position 8 of tRNAs, which functions as a near-UV photosensor. Also catalyzes the transfer of sulfur to the sulfur carrier protein ThiS, forming ThiS-thiocarboxylate. This is a step in the synthesis of thiazole, in the thiamine biosynthesis pathway. The sulfur is donated as persulfide by IscS. The sequence is that of tRNA sulfurtransferase from Haemophilus ducreyi (strain 35000HP / ATCC 700724).